The primary structure comprises 632 residues: Probable potassium transport system protein Kup 3 (632 aa).

Transmembrane regions (helical) follow at residues 17–37 (LFYLALGSVGVVYGDIGTSPL), 60–80 (LISLMIWALTIIVTIKYVLFL), 106–126 (TAILMLLGLMGAALFLGDAMI), 144–164 (PSLSDYIVPISVVILALLFVV), 175–195 (FFGPITAVWFLVMAAAGISHI), 210–230 (AVSFLLHEGFYGVVVLGAVFL), 254–274 (WFLLVFPALTLNYLGQGALVL), 292–312 (ALLPVVILATAATIIASQAVI), 344–364 (IFVPSVNAVLFIGVIFLVLSF), 370–390 (LATAYGISVTGAMVVTSIMAF), 401–421 (LPLAVVALAPLVVLELIFLGA), and 426–446 (IHDGGYIPILIATAFTVIMWT).

It belongs to the HAK/KUP transporter (TC 2.A.72) family.

It localises to the cell inner membrane. The enzyme catalyses K(+)(in) + H(+)(in) = K(+)(out) + H(+)(out). Its function is as follows. Transport of potassium into the cell. Likely operates as a K(+):H(+) symporter. This Rhizobium etli (strain ATCC 51251 / DSM 11541 / JCM 21823 / NBRC 15573 / CFN 42) protein is Probable potassium transport system protein Kup 3.